Here is a 775-residue protein sequence, read N- to C-terminus: Protein STRUBBELIG-RECEPTOR FAMILY 1 (775 aa).

The first 31 residues, 1–31 (MRSMRSGRDNNICFLGFLSFALISLPSLSLA), serve as a signal peptide directing secretion. The Extracellular portion of the chain corresponds to 32–314 (LTNPDDVAAI…GKEDSFTSKR (283 aa)). 6 LRR repeats span residues 101 to 122 (SLKA…TLPV), 123 to 146 (SLQN…SSLK), 147 to 169 (SLSV…FQDL), 171 to 193 (LMIN…MQNL), 195 to 217 (TLTS…QDLP), and 218 to 238 (LKDL…KLLS). A glycan (N-linked (GlcNAc...) asparagine) is linked at N133. N181 and N192 each carry an N-linked (GlcNAc...) asparagine glycan. N250 carries an N-linked (GlcNAc...) asparagine glycan. The interval 254–308 (APSPSPETPPSPTSPKRPFFGPPSPNASAGHGQAHVRSPPSDHHPSRPTPQGKED) is disordered. The segment covering 256–278 (SPSPETPPSPTSPKRPFFGPPSP) has biased composition (pro residues). An N-linked (GlcNAc...) asparagine glycan is attached at N279. A helical transmembrane segment spans residues 315-335 (IIWISILGAFSFVVLALVCLL). At 336 to 775 (CGRKCLRKRE…NGDNQYTGRR (440 aa)) the chain is on the cytoplasmic side. Residues 345-414 (EDSEQLSKPH…VGSESKQESH (70 aa)) are disordered. The segment covering 367 to 379 (RSNASMLPPSNTF) has biased composition (polar residues). Residues 380–391 (NKDKEARPKERV) are compositionally biased toward basic and acidic residues. The region spanning 478-756 (FSHENLIGTG…EVVQDLSDMI (279 aa)) is the Protein kinase domain.

The protein belongs to the protein kinase superfamily. Ser/Thr protein kinase family. As to expression, expressed in roots, stems, leaves and flowers. Low expression in seedlings and siliques.

The protein localises to the membrane. Its function is as follows. Not essential for epidermal patterning and not redundant with STRUBBELIG. This chain is Protein STRUBBELIG-RECEPTOR FAMILY 1 (SRF1), found in Arabidopsis thaliana (Mouse-ear cress).